A 362-amino-acid chain; its full sequence is Probable dual-specificity RNA methyltransferase RlmN (362 aa).

Glutamate 99 functions as the Proton acceptor in the catalytic mechanism. The 237-residue stretch at 105-341 (SPDRHTVCVS…VTVRKSQGAS (237 aa)) folds into the Radical SAM core domain. Residues cysteine 112 and cysteine 346 are joined by a disulfide bond. Residues cysteine 119, cysteine 123, and cysteine 126 each coordinate [4Fe-4S] cluster. S-adenosyl-L-methionine is bound by residues 171–172 (GE), serine 204, 227–229 (SLH), and asparagine 303. Cysteine 346 (S-methylcysteine intermediate) is an active-site residue.

Belongs to the radical SAM superfamily. RlmN family. The cofactor is [4Fe-4S] cluster.

The protein resides in the cytoplasm. It carries out the reaction adenosine(2503) in 23S rRNA + 2 reduced [2Fe-2S]-[ferredoxin] + 2 S-adenosyl-L-methionine = 2-methyladenosine(2503) in 23S rRNA + 5'-deoxyadenosine + L-methionine + 2 oxidized [2Fe-2S]-[ferredoxin] + S-adenosyl-L-homocysteine. The enzyme catalyses adenosine(37) in tRNA + 2 reduced [2Fe-2S]-[ferredoxin] + 2 S-adenosyl-L-methionine = 2-methyladenosine(37) in tRNA + 5'-deoxyadenosine + L-methionine + 2 oxidized [2Fe-2S]-[ferredoxin] + S-adenosyl-L-homocysteine. Its function is as follows. Specifically methylates position 2 of adenine 2503 in 23S rRNA and position 2 of adenine 37 in tRNAs. The sequence is that of Probable dual-specificity RNA methyltransferase RlmN from Chlorobium phaeobacteroides (strain BS1).